We begin with the raw amino-acid sequence, 142 residues long: Large ribosomal subunit protein uL11 (142 aa).

It belongs to the universal ribosomal protein uL11 family. In terms of assembly, part of the ribosomal stalk of the 50S ribosomal subunit. Interacts with L10 and the large rRNA to form the base of the stalk. L10 forms an elongated spine to which L12 dimers bind in a sequential fashion forming a multimeric L10(L12)X complex. In terms of processing, one or more lysine residues are methylated.

Forms part of the ribosomal stalk which helps the ribosome interact with GTP-bound translation factors. This Mycobacterium sp. (strain MCS) protein is Large ribosomal subunit protein uL11.